The sequence spans 197 residues: Ion-translocating oxidoreductase complex subunit B (197 aa).

The segment at Met1–Ser26 is hydrophobic. The 4Fe-4S domain maps to Glu32–Val90. Residues Cys49, Cys52, Cys57, Cys73, Cys115, Cys118, Cys121, Cys125, Cys145, Cys148, Cys151, and Cys155 each contribute to the [4Fe-4S] cluster site. 2 4Fe-4S ferredoxin-type domains span residues Gln106 to Lys135 and Gln136 to Ala165.

Belongs to the 4Fe4S bacterial-type ferredoxin family. RnfB subfamily. The complex is composed of six subunits: RnfA, RnfB, RnfC, RnfD, RnfE and RnfG. The cofactor is [4Fe-4S] cluster.

It is found in the cell inner membrane. In terms of biological role, part of a membrane-bound complex that couples electron transfer with translocation of ions across the membrane. This Hahella chejuensis (strain KCTC 2396) protein is Ion-translocating oxidoreductase complex subunit B.